The sequence spans 779 residues: Putative helicase V13 (779 aa).

The 166-residue stretch at 477 to 642 (DNPKPFITSL…FVKEEELNEK (166 aa)) folds into the SF3 helicase domain. 504–511 (GKSNAGKS) provides a ligand contact to ATP.

This is Putative helicase V13 from Acanthamoeba polyphaga (Amoeba).